Consider the following 612-residue polypeptide: Peroxisomal targeting signal receptor (612 aa).

Met-1 is subject to N-acetylmethionine. The disordered stretch occupies residues 1 to 24; that stretch reads MDVGSCSVGNNPLAQLHKHTQQNK. A Glycyl cysteine thioester (Cys-Gly) (interchain with G-Cter in ubiquitin) cross-link involves residue Cys-6. Residues 7–29 form an amphipathic helix 1 (AH1) region; sequence SVGNNPLAQLHKHTQQNKSLQFN. Glycyl lysine isopeptide (Lys-Gly) (interchain with G-Cter in ubiquitin) cross-links involve residues Lys-18 and Lys-24. A Phosphoserine modification is found at Ser-61. Residues 64–97 form a TPR 1 repeat; it reads NMANMQRFINGEPLIDDKRRMEIGPSSGRLPPFS. An amphipathic helix 2 (AH2) region spans residues 70–104; the sequence is RFINGEPLIDDKRRMEIGPSSGRLPPFSNVHSLQT. The WxxxF/Y motif 1 signature appears at 120–124; that stretch reads WSQEF. Residues 129–151 are disordered; sequence SIQNRNADTGNSEKAWQRGSTTA. Positions 158–174 are amphipathic helix 3 (AH3); that stretch reads PNTMMNNYAYASMNSLS. The disordered stretch occupies residues 182 to 202; that stretch reads AFMNQQQSGRSKEGVNEQEQQ. The WxxxF/Y motif 2 signature appears at 204–208; it reads WTDQF. The interval 257 to 273 is amphipathic helix 4 (AH4); sequence FQEVWDSIHKDAEEVLP. TPR repeat units lie at residues 313 to 346, 347 to 380, 381 to 418, 419 to 456, 457 to 490, 491 to 524, and 525 to 558; these read PNAY…KPDH, VDAW…DPKN, LEAM…IWSR, IKQQ…STID, PEIQ…NPND, ELMW…KPSF, and VRAR…HEVN.

The protein belongs to the peroxisomal targeting signal receptor family. Interacts (via WxxxF/Y and LVxEF motifs) with PEX14; promoting translocation through the PEX13-PEX14 docking complex. In terms of processing, monoubiquitinated at Cys-6 by PEX2 during PEX5 passage through the retrotranslocation channel: monoubiquitination acts as a signal for PEX5 extraction and is required for proper export from peroxisomes and recycling. Ubiquitination at Cys-6 is UBC4-independent but requires the presence of PEX4. When PEX5 recycling is compromised, polyubiquitinated at Lys-18 and Lys-24 by PEX10 during its passage through the retrotranslocation channel, leading to its degradation. Ubiquitination at Lys-18 and Lys-24 are UBC4-dependent. Monoubiquitination at Cys-6 and polyubiquitination at Lys-18 and Lys-24 are removed by UBP15 in the cytosol, resetting PEX5 for a subsequent import cycle.

Its subcellular location is the cytoplasm. The protein resides in the cytosol. The protein localises to the peroxisome matrix. Its function is as follows. Receptor that mediates peroxisomal import of proteins containing a C-terminal PTS1-type tripeptide peroxisomal targeting signal (SKL-type). Binds to cargo proteins containing a PTS1 peroxisomal targeting signal in the cytosol, and translocates them into the peroxisome matrix by passing through the PEX13-PEX14 docking complex along with cargo proteins. PEX5 receptor is then retrotranslocated into the cytosol, leading to release of bound cargo in the peroxisome matrix, and reset for a subsequent peroxisome import cycle. The protein is Peroxisomal targeting signal receptor of Saccharomyces cerevisiae (strain ATCC 204508 / S288c) (Baker's yeast).